The sequence spans 20 residues: Glutathione S-transferase 2 (20 aa).

In terms of domain architecture, GST N-terminal spans 1-20 (GYKVTYFAIRGLAEPIXLLL). Tyr-6 contacts glutathione.

Belongs to the GST superfamily. Sigma family.

The catalysed reaction is RX + glutathione = an S-substituted glutathione + a halide anion + H(+). Its function is as follows. Conjugation of reduced glutathione to a wide number of exogenous and endogenous hydrophobic electrophiles. The polypeptide is Glutathione S-transferase 2 (GST2) (Ascaris suum (Pig roundworm)).